Reading from the N-terminus, the 452-residue chain is Tubulin beta-2 chain (452 aa).

GTP-binding residues include Q11, E72, S141, G145, T146, G147, N207, and N229. E72 is a binding site for Mg(2+). Residues 414-452 (AESNMNDPVAEYQQYQDATADDEEEYDDEAADDHHQYES) are disordered. The span at 432 to 444 (TADDEEEYDDEAA) shows a compositional bias: acidic residues.

This sequence belongs to the tubulin family. In terms of assembly, dimer of alpha and beta chains. A typical microtubule is a hollow water-filled tube with an outer diameter of 25 nm and an inner diameter of 15 nM. Alpha-beta heterodimers associate head-to-tail to form protofilaments running lengthwise along the microtubule wall with the beta-tubulin subunit facing the microtubule plus end conferring a structural polarity. Microtubules usually have 13 protofilaments but different protofilament numbers can be found in some organisms and specialized cells. Mg(2+) serves as cofactor.

It localises to the cytoplasm. The protein resides in the cytoskeleton. Its function is as follows. Tubulin is the major constituent of microtubules, a cylinder consisting of laterally associated linear protofilaments composed of alpha- and beta-tubulin heterodimers. Microtubules grow by the addition of GTP-tubulin dimers to the microtubule end, where a stabilizing cap forms. Below the cap, tubulin dimers are in GDP-bound state, owing to GTPase activity of alpha-tubulin. The protein is Tubulin beta-2 chain (TUBB2) of Solanum tuberosum (Potato).